Consider the following 262-residue polypeptide: Iso-A82775C biosynthesis cluster protein B (262 aa).

In terms of biological role, part of the gene cluster that mediates the biosynthesis of iso-A82775C, a enylepoxycyclohexane and biosynthetic precursor of the chloropestolide anticancer natural products. Within the cluster, the prenyltransferase iacE prenylates siccayne to generate pestalodiol E, using dimethylallyl diphosphate (DMAPP) as cosubstrate. The probable oxidoreductase iacF is then involved in the epoxidation of pestalodiol F to pestalodiol F, which is further converted to pestalofone A by the short-chain dehydrogenase/reductase iacG. Iso-A82775C is subsequently generated from pestalofone A by the short-chain dehydrogenase/reductase iacC. Iso-A82775C is further condensed with maldoxin via a Diels-Alder reaction to produce the anticancer natural products chloropestolides A to E. This is Iso-A82775C biosynthesis cluster protein B from Pestalotiopsis fici (strain W106-1 / CGMCC3.15140).